The following is a 99-amino-acid chain: Osteocalcin (99 aa).

The signal sequence occupies residues 1 to 23 (MRTLSLLTLLALTAFCLSDLAGA). The propeptide occupies 24–49 (KPSDSESDKAFMSKQEGSKVVNRLRR). The region spanning 50–96 (YLNNGLGAPAPYPDPLEPHREVCELNPNCDELADHIGFQDAYKRIYG) is the Gla domain. P58 carries the hydroxyproline modification. 4 residues coordinate Ca(2+): E66, E70, E73, and D79. 4-carboxyglutamate occurs at positions 66, 70, and 73. Residues C72 and C78 are joined by a disulfide bond.

It belongs to the osteocalcin/matrix Gla protein family. Gamma-carboxyglutamate residues are formed by vitamin K dependent carboxylation by GGCX. These residues are essential for the binding of calcium. Decarboxylation promotes the hormone activity.

Its subcellular location is the secreted. The carboxylated form is one of the main organic components of the bone matrix, which constitutes 1-2% of the total bone protein: it acts as a negative regulator of bone formation and is required to limit bone formation without impairing bone resorption or mineralization. The carboxylated form binds strongly to apatite and calcium. Its function is as follows. The uncarboxylated form acts as a hormone secreted by osteoblasts, which regulates different cellular processes, such as energy metabolism, male fertility and brain development. Regulates of energy metabolism by acting as a hormone favoring pancreatic beta-cell proliferation, insulin secretion and sensitivity and energy expenditure. Uncarboxylated osteocalcin hormone also promotes testosterone production in the testes: acts as a ligand for G protein-coupled receptor GPRC6A at the surface of Leydig cells, initiating a signaling response that promotes the expression of enzymes required for testosterone synthesis in a CREB-dependent manner. Also acts as a regulator of brain development: osteocalcin hormone crosses the blood-brain barrier and acts as a ligand for GPR158 on neurons, initiating a signaling response that prevents neuronal apoptosis in the hippocampus, favors the synthesis of all monoamine neurotransmitters and inhibits that of gamma-aminobutyric acid (GABA). Osteocalcin also crosses the placenta during pregnancy and maternal osteocalcin is required for fetal brain development. In Rattus norvegicus (Rat), this protein is Osteocalcin (Bglap).